Reading from the N-terminus, the 484-residue chain is Acid alpha-amylase (484 aa).

Asparagine 24 carries an N-linked (GlcNAc...) asparagine glycan. Cysteine 30 and cysteine 38 form a disulfide bridge. Tryptophan 83 contacts substrate. A Ca(2+)-binding site is contributed by aspartate 121. Position 122 (histidine 122) interacts with substrate. Cysteine 150 and cysteine 164 are oxidised to a cystine. The N-linked (GlcNAc...) asparagine glycan is linked to asparagine 157. 2 residues coordinate Ca(2+): glutamate 162 and aspartate 175. N-linked (GlcNAc...) asparagine glycosylation is present at asparagine 197. Position 204 (arginine 204) interacts with substrate. Ca(2+) contacts are provided by aspartate 206, glutamate 210, and glutamate 230. The active-site Nucleophile is aspartate 206. A substrate-binding site is contributed by 209-210 (LE). Catalysis depends on glutamate 230, which acts as the Proton donor. Glycine 234 serves as a coordination point for substrate. A disulfide bridge links cysteine 240 with cysteine 283. Substrate contacts are provided by aspartate 297 and arginine 344. A disulfide bond links cysteine 440 and cysteine 475.

It belongs to the glycosyl hydrolase 13 family. Monomer. Requires Ca(2+) as cofactor.

Its subcellular location is the secreted. The enzyme catalyses Endohydrolysis of (1-&gt;4)-alpha-D-glucosidic linkages in polysaccharides containing three or more (1-&gt;4)-alpha-linked D-glucose units.. The protein is Acid alpha-amylase of Aspergillus niger.